Consider the following 177-residue polypeptide: Tumor necrosis factor ligand superfamily member 18 (177 aa).

Topologically, residues 1 to 27 (MCLSHLENMPLSHSRTQGAQRSSWKLW) are cytoplasmic. Residues 28 to 48 (LFCSIVMLLFLCSFSWLIFIF) traverse the membrane as a helical; Signal-anchor for type II membrane protein segment. In terms of domain architecture, THD spans 47 to 170 (IFLQLETAKE…NNTYWGIILL (124 aa)). Residues 49-177 (LQLETAKEPC…ILLANPQFIS (129 aa)) are Extracellular-facing. An intrachain disulfide couples Cys-58 to Cys-78. Residues Asn-129 and Asn-161 are each glycosylated (N-linked (GlcNAc...) asparagine).

The protein belongs to the tumor necrosis factor family. As to quaternary structure, homodimer. Homotrimer. In terms of tissue distribution, expressed at high levels in the small intestine, ovary, testis, kidney and endothelial cells.

The protein localises to the cell membrane. Its function is as follows. Cytokine that binds to TNFRSF18/AITR/GITR. Regulates T-cell responses. Can function as costimulator and lower the threshold for T-cell activation and T-cell proliferation. Important for interactions between activated T-lymphocytes and endothelial cells. Mediates activation of NF-kappa-B. Triggers increased phosphorylation of STAT1 and up-regulates expression of VCAM1 and ICAM1. Promotes leukocyte adhesion to endothelial cells. Regulates migration of monocytes from the splenic reservoir to sites of inflammation. In Homo sapiens (Human), this protein is Tumor necrosis factor ligand superfamily member 18.